The following is a 524-amino-acid chain: GMP synthase [glutamine-hydrolyzing] (524 aa).

The Glutamine amidotransferase type-1 domain occupies 9-207; sequence RILILDFGSQ…VIHICQCIPN (199 aa). Cys86 functions as the Nucleophile in the catalytic mechanism. Catalysis depends on residues His181 and Glu183. Residues 208-399 enclose the GMPS ATP-PPase domain; the sequence is WTTKHIIEDS…LGLPADLIYR (192 aa). Residue 235–241 participates in ATP binding; it reads SGGVDSA.

As to quaternary structure, homodimer.

It carries out the reaction XMP + L-glutamine + ATP + H2O = GMP + L-glutamate + AMP + diphosphate + 2 H(+). The protein operates within purine metabolism; GMP biosynthesis; GMP from XMP (L-Gln route): step 1/1. In terms of biological role, catalyzes the synthesis of GMP from XMP. The protein is GMP synthase [glutamine-hydrolyzing] of Coxiella burnetii (strain RSA 493 / Nine Mile phase I).